The primary structure comprises 154 residues: Cyanate hydratase (154 aa).

Catalysis depends on residues Arg100, Glu103, and Ser126.

It belongs to the cyanase family.

The enzyme catalyses cyanate + hydrogencarbonate + 3 H(+) = NH4(+) + 2 CO2. Its function is as follows. Catalyzes the reaction of cyanate with bicarbonate to produce ammonia and carbon dioxide. This is Cyanate hydratase from Aspergillus clavatus (strain ATCC 1007 / CBS 513.65 / DSM 816 / NCTC 3887 / NRRL 1 / QM 1276 / 107).